Here is a 447-residue protein sequence, read N- to C-terminus: Alpha-1,3-mannosyl-glycoprotein 2-beta-N-acetylglucosaminyltransferase (447 aa).

Over 1 to 6 (MLKKQS) the chain is Cytoplasmic. The chain crosses the membrane as a helical; Signal-anchor for type II membrane protein span at residues 7 to 29 (AGLVLWGAIIFVGWNALLLLFFW). Topologically, residues 30 to 447 (TRPAPGRLPS…TWNGYDPSWN (418 aa)) are lumenal. C115 and C145 are disulfide-bonded. Residues R117, D144, H190, and D212 each coordinate substrate. D213 lines the Mn(2+) pocket. C239 and C305 are disulfide-bonded. Catalysis depends on D291, which acts as the Proton acceptor. S322 lines the substrate pocket.

Belongs to the glycosyltransferase 13 family. In terms of assembly, interacts with MGAT4D. Interacts with BRI3. The cofactor is Mn(2+). Appears to be present in all tissues.

The protein resides in the golgi apparatus membrane. Its subcellular location is the cytoplasm. It localises to the perinuclear region. It carries out the reaction N(4)-(alpha-D-Man-(1-&gt;3)-[alpha-D-Man-(1-&gt;3)-[alpha-D-Man-(1-&gt;6)]-alpha-D-Man-(1-&gt;6)]-beta-D-Man-(1-&gt;4)-beta-D-GlcNAc-(1-&gt;4)-beta-D-GlcNAc)-L-asparaginyl-[protein] (N-glucan mannose isomer 5A1,2) + UDP-N-acetyl-alpha-D-glucosamine = N(4)-{beta-D-GlcNAc-(1-&gt;2)-alpha-D-Man-(1-&gt;3)-[alpha-D-Man-(1-&gt;3)-[alpha-D-Man-(1-&gt;6)]-alpha-D-Man-(1-&gt;6)]-beta-D-Man-(1-&gt;4)-beta-D-GlcNAc-(1-&gt;4)-beta-D-GlcNAc}-L-asparaginyl-[protein] + UDP + H(+). It participates in protein modification; protein glycosylation. Functionally, initiates complex N-linked carbohydrate formation. Essential for the conversion of high-mannose to hybrid and complex N-glycans. In Rattus norvegicus (Rat), this protein is Alpha-1,3-mannosyl-glycoprotein 2-beta-N-acetylglucosaminyltransferase (Mgat1).